Here is a 575-residue protein sequence, read N- to C-terminus: Guanine nucleotide-binding protein-like 3-like protein (575 aa).

Positions 1 to 30 (MMKLRHKNKKPGKGSKGCKKPAKQNGKKAA) are enriched in basic residues. The segment at 1-75 (MMKLRHKNKK…AAREQERHRR (75 aa)) is disordered. The tract at residues 9–28 (KKPGKGSKGCKKPAKQNGKK) is required for nucleolar localization. Over residues 42–72 (SNDHASREAELKKKRVGEMREKQQAAREQER) the composition is skewed to basic and acidic residues. Residues 51–79 (ELKKKRVGEMREKQQAAREQERHRRRTIE) are a coiled coil. The CP-type G domain occupies 118-303 (YKEFHKVVEY…LLDAPGIVPG (186 aa)). GTP is bound by residues 166 to 169 (NKID), 252 to 259 (GLPNVGKS), and 296 to 299 (DAPG). A Glycyl lysine isopeptide (Lys-Gly) (interchain with G-Cter in SUMO1) cross-link involves residue Lys-470.

It belongs to the TRAFAC class YlqF/YawG GTPase family. As to quaternary structure, interacts with MDM2; this interaction, which occurs in the nucleoplasm, stabilizes MDM2. Indirectly interacts with TP53, via MDM2-binding. Interacts with TERF1; this interaction probably occurs in the nucleoplasm and is increased during mitosis, when the nucleolus is disassembled. This binding may promote TERF1 homodimerization. Interacts with TERT.

It is found in the nucleus. Its subcellular location is the nucleolus. In terms of biological role, stabilizes TERF1 telomeric association by preventing TERF1 recruitment by PML. Stabilizes TERF1 protein by preventing its ubiquitination and hence proteasomal degradation. Does so by interfering with TERF1-binding to FBXO4 E3 ubiquitin-protein ligase. Required for cell proliferation. By stabilizing TRF1 protein during mitosis, promotes metaphase-to-anaphase transition. Stabilizes MDM2 protein by preventing its ubiquitination, and hence proteasomal degradation. By acting on MDM2, may affect TP53 activity. Required for normal processing of ribosomal pre-rRNA. Binds GTP. The protein is Guanine nucleotide-binding protein-like 3-like protein (GNL3L) of Bos taurus (Bovine).